The following is a 326-amino-acid chain: MLAWALLYAVLWSLAGVGSQRSSLFNIKGFVYGTVGHPVKIYVKLHQASPVLICMDIDRANKETVDPTYLWTGPNENTLKGNSQINITNTGELVLKDFLEPLSGLYSCMLSYKTIKAETQEETMIKKKYDFLVFAYREPDYSYHMAVRFTTGSCVGRHNDLLFRVLKKILDNLISDLLCHVIEPSYKCHFVKLPERDFLYELFIAFQVNPFAPGWRSLCNRSADCEDITNHNVLKARDRMEEFFRKQAHILHHHFNRTVPAMHFVDHSFQVTRIDNCRPGFGKNEGLHSNCATCCVVCSPGTFSPDVDVTCQICVSVHIYGAKACP.

The N-terminal stretch at 1 to 19 is a signal peptide; the sequence is MLAWALLYAVLWSLAGVGS. 3 N-linked (GlcNAc...) asparagine glycosylation sites follow: N86, N220, and N256.

This sequence belongs to the zona pellucida-binding protein Sp38 family. Post-translationally, N-glycosylated. In terms of tissue distribution, expressed specifically in male germ cells.

It is found in the cytoplasmic vesicle. It localises to the secretory vesicle. Its subcellular location is the acrosome. The protein localises to the secreted. Is implicated in sperm-oocyte interaction during fertilization. In Mus musculus (Mouse), this protein is Zona pellucida-binding protein 2 (Zpbp2).